The primary structure comprises 260 residues: Pyridoxine 5'-phosphate synthase (260 aa).

Asn-15 serves as a coordination point for 3-amino-2-oxopropyl phosphate. 17–18 (DH) serves as a coordination point for 1-deoxy-D-xylulose 5-phosphate. 3-amino-2-oxopropyl phosphate is bound at residue Arg-26. The active-site Proton acceptor is His-51. Positions 53 and 58 each coordinate 1-deoxy-D-xylulose 5-phosphate. Glu-78 acts as the Proton acceptor in catalysis. Thr-108 serves as a coordination point for 1-deoxy-D-xylulose 5-phosphate. His-199 functions as the Proton donor in the catalytic mechanism. 3-amino-2-oxopropyl phosphate contacts are provided by residues Gly-200 and 221–222 (GH).

It belongs to the PNP synthase family. As to quaternary structure, homooctamer; tetramer of dimers.

It is found in the cytoplasm. It catalyses the reaction 3-amino-2-oxopropyl phosphate + 1-deoxy-D-xylulose 5-phosphate = pyridoxine 5'-phosphate + phosphate + 2 H2O + H(+). Its pathway is cofactor biosynthesis; pyridoxine 5'-phosphate biosynthesis; pyridoxine 5'-phosphate from D-erythrose 4-phosphate: step 5/5. Catalyzes the complicated ring closure reaction between the two acyclic compounds 1-deoxy-D-xylulose-5-phosphate (DXP) and 3-amino-2-oxopropyl phosphate (1-amino-acetone-3-phosphate or AAP) to form pyridoxine 5'-phosphate (PNP) and inorganic phosphate. The sequence is that of Pyridoxine 5'-phosphate synthase from Cupriavidus pinatubonensis (strain JMP 134 / LMG 1197) (Cupriavidus necator (strain JMP 134)).